A 358-amino-acid polypeptide reads, in one-letter code: L-lysine 3-hydroxylase (358 aa).

Residues His-178, Glu-180, and His-314 each contribute to the Fe cation site. A 2-oxoglutarate-binding site is contributed by Arg-328.

It belongs to the clavaminate synthase family. Fe(2+) serves as cofactor.

It catalyses the reaction L-lysine + 2-oxoglutarate + O2 = (3S)-3-hydroxy-L-lysine + succinate + CO2. In terms of biological role, alpha-ketoglutarate-dependent dioxygenase that in vitro catalyzes the regio- and stereoselective hydroxylation of L-lysine, leading to (3S)-3-hydroxy-L-lysine. Can also use (5R)-5-hydroxy-L-lysine as substrate, but neither D-lysine nor L-ornithine. This Catenulispora acidiphila (strain DSM 44928 / JCM 14897 / NBRC 102108 / NRRL B-24433 / ID139908) protein is L-lysine 3-hydroxylase.